A 385-amino-acid chain; its full sequence is Protein delta homolog 1 (385 aa).

Positions 1–23 (MIATGALLRVLLLLLAFGHSTYG) are cleaved as a signal peptide. EGF-like domains lie at 24–55 (AECDPPCDPQYGFCEADNVCRCHVGWEGPLCD), 53–86 (LCDKCVTAPGCVNGVCKEPWQCICKDGWDGKFCE), 88–125 (DVRACTSTPCANNGTCVDLEKGQYECSCTPGFSGKDCQ), 127–168 (KAGP…NFCE), 172–208 (ATNSCTPNPCENDGVCTDIGGDFRCRCPAGFVDKTCS), and 210–247 (PVSNCASGPCQNGGTCLQHTQVSFECLCKPPFMGPTCA). The Extracellular portion of the chain corresponds to 24-305 (AECDPPCDPQ…KSTPLLTEGQ (282 aa)). Intrachain disulfides connect Cys-26-Cys-37, Cys-30-Cys-43, Cys-45-Cys-54, Cys-57-Cys-68, Cys-63-Cys-74, Cys-76-Cys-85, Cys-92-Cys-103, Cys-97-Cys-113, Cys-115-Cys-124, Cys-131-Cys-144, Cys-138-Cys-156, and Cys-158-Cys-167. O-linked (GalNAc...) serine glycosylation occurs at Ser-94. N-linked (GlcNAc...) asparagine glycosylation is present at Asn-100. Residue Asn-165 is glycosylated (N-linked (GlcNAc...) asparagine; atypical; partial). Residue Asn-174 is glycosylated (N-linked (GlcNAc...) asparagine; atypical). Intrachain disulfides connect Cys-176–Cys-187, Cys-181–Cys-196, Cys-198–Cys-207, Cys-214–Cys-225, Cys-219–Cys-235, and Cys-237–Cys-246. A glycan (O-linked (GalNAc...) serine) is linked at Ser-216. Residue Thr-224 is glycosylated (O-linked (GalNAc...) threonine). An O-linked (GalNAc...) threonine glycan is attached at Thr-258. The O-linked (GalNAc...) threonine; partial glycan is linked to Thr-267. Residue Thr-271 is glycosylated (O-linked (GalNAc...) threonine). Asn-295 carries an N-linked (GlcNAc...) asparagine glycan. The chain crosses the membrane as a helical span at residues 306-329 (AICFTILGVLTSLVVLGTVAIVFL). At 330 to 385 (NKCETWVSNLRYNHTFRKKKNLLLQYNSGEELAVNIIFPEKIDMTTFNKEAGDEEI) the chain is on the cytoplasmic side.

As to quaternary structure, monomer. Interacts with SH3RF2. Post-translationally, N- and O-glycosylated. In terms of tissue distribution, highly expressed in fetal liver, placenta, adult adrenal gland, brain, testis and ovary and, to a lesser degree, in adult kidney, muscle, thymus and heart.

It localises to the membrane. The protein resides in the cytoplasm. Functionally, may have a role in neuroendocrine differentiation. Inhibits adipocyte differentiation. This Mus musculus (Mouse) protein is Protein delta homolog 1 (Dlk1).